Consider the following 365-residue polypeptide: Mannonate dehydratase 1 (365 aa).

It belongs to the mannonate dehydratase family. It depends on Fe(2+) as a cofactor. Mn(2+) is required as a cofactor.

It carries out the reaction D-mannonate = 2-dehydro-3-deoxy-D-gluconate + H2O. It participates in carbohydrate metabolism; pentose and glucuronate interconversion. Catalyzes the dehydration of D-mannonate. In Bacillus licheniformis (strain ATCC 14580 / DSM 13 / JCM 2505 / CCUG 7422 / NBRC 12200 / NCIMB 9375 / NCTC 10341 / NRRL NRS-1264 / Gibson 46), this protein is Mannonate dehydratase 1.